We begin with the raw amino-acid sequence, 123 residues long: Putative iron-sulfur cluster insertion protein ErpA (123 aa).

Residues Cys51, Cys115, and Cys117 each coordinate iron-sulfur cluster.

Belongs to the HesB/IscA family. Homodimer. It depends on iron-sulfur cluster as a cofactor.

Required for insertion of 4Fe-4S clusters. The protein is Putative iron-sulfur cluster insertion protein ErpA of Bordetella bronchiseptica (strain ATCC BAA-588 / NCTC 13252 / RB50) (Alcaligenes bronchisepticus).